A 585-amino-acid polypeptide reads, in one-letter code: 1-deoxy-D-xylulose-5-phosphate synthase (585 aa).

Thiamine diphosphate-binding positions include His80 and 121 to 123; that span reads GHS. Position 152 (Asp152) interacts with Mg(2+). Residues 153 to 154, Asn181, Tyr259, and Glu334 each bind thiamine diphosphate; that span reads GS. Asn181 contributes to the Mg(2+) binding site.

Belongs to the transketolase family. DXPS subfamily. In terms of assembly, homodimer. The cofactor is Mg(2+). It depends on thiamine diphosphate as a cofactor.

The catalysed reaction is D-glyceraldehyde 3-phosphate + pyruvate + H(+) = 1-deoxy-D-xylulose 5-phosphate + CO2. The protein operates within metabolic intermediate biosynthesis; 1-deoxy-D-xylulose 5-phosphate biosynthesis; 1-deoxy-D-xylulose 5-phosphate from D-glyceraldehyde 3-phosphate and pyruvate: step 1/1. Its function is as follows. Catalyzes the acyloin condensation reaction between C atoms 2 and 3 of pyruvate and glyceraldehyde 3-phosphate to yield 1-deoxy-D-xylulose-5-phosphate (DXP). The protein is 1-deoxy-D-xylulose-5-phosphate synthase of Buchnera aphidicola subsp. Schizaphis graminum (strain Sg).